Reading from the N-terminus, the 152-residue chain is 6,7-dimethyl-8-ribityllumazine synthase (152 aa).

5-amino-6-(D-ribitylamino)uracil is bound by residues Phe21, Ala55–Glu57, and Cys79–Ile81. Ser84 to Thr85 lines the (2S)-2-hydroxy-3-oxobutyl phosphate pocket. His87 serves as the catalytic Proton donor. Phe112 provides a ligand contact to 5-amino-6-(D-ribitylamino)uracil. A (2S)-2-hydroxy-3-oxobutyl phosphate-binding site is contributed by Arg126.

Belongs to the DMRL synthase family. In terms of assembly, forms an icosahedral capsid composed of 60 subunits, arranged as a dodecamer of pentamers.

It catalyses the reaction (2S)-2-hydroxy-3-oxobutyl phosphate + 5-amino-6-(D-ribitylamino)uracil = 6,7-dimethyl-8-(1-D-ribityl)lumazine + phosphate + 2 H2O + H(+). Its pathway is cofactor biosynthesis; riboflavin biosynthesis; riboflavin from 2-hydroxy-3-oxobutyl phosphate and 5-amino-6-(D-ribitylamino)uracil: step 1/2. Catalyzes the formation of 6,7-dimethyl-8-ribityllumazine by condensation of 5-amino-6-(D-ribitylamino)uracil with 3,4-dihydroxy-2-butanone 4-phosphate. This is the penultimate step in the biosynthesis of riboflavin. This is 6,7-dimethyl-8-ribityllumazine synthase from Staphylococcus saprophyticus subsp. saprophyticus (strain ATCC 15305 / DSM 20229 / NCIMB 8711 / NCTC 7292 / S-41).